Reading from the N-terminus, the 78-residue chain is Large ribosomal subunit protein uL30 (78 aa).

Acidic residues predominate over residues 58 to 68 (DDTSPDAETGA). The interval 58 to 78 (DDTSPDAETGADLERDGGNRS) is disordered. Over residues 69-78 (DLERDGGNRS) the composition is skewed to basic and acidic residues.

Belongs to the universal ribosomal protein uL30 family. In terms of assembly, part of the 50S ribosomal subunit.

This is Large ribosomal subunit protein uL30 from Roseiflexus sp. (strain RS-1).